A 59-amino-acid polypeptide reads, in one-letter code: Sec-independent protein translocase protein TatA (59 aa).

A helical transmembrane segment spans residues 1–21 (MFSNIGFPGLILILVAVLILF).

The protein belongs to the TatA/E family. In terms of assembly, forms a complex with TatC.

It localises to the cell membrane. Part of the twin-arginine translocation (Tat) system that transports large folded proteins containing a characteristic twin-arginine motif in their signal peptide across membranes. TatA could form the protein-conducting channel of the Tat system. The polypeptide is Sec-independent protein translocase protein TatA (Bacillus mycoides (strain KBAB4) (Bacillus weihenstephanensis)).